A 466-amino-acid polypeptide reads, in one-letter code: Ribulose bisphosphate carboxylase large chain (466 aa).

An N6,N6,N6-trimethyllysine modification is found at lysine 5. 2 residues coordinate substrate: asparagine 114 and threonine 164. Residue lysine 166 is the Proton acceptor of the active site. Lysine 168 serves as a coordination point for substrate. Residues lysine 192, aspartate 194, and glutamate 195 each contribute to the Mg(2+) site. Lysine 192 carries the post-translational modification N6-carboxylysine. Histidine 285 serves as the catalytic Proton acceptor. Positions 286, 318, and 370 each coordinate substrate.

Belongs to the RuBisCO large chain family. Type I subfamily. As to quaternary structure, heterohexadecamer of 8 large chains and 8 small chains; disulfide-linked. The disulfide link is formed within the large subunit homodimers. The cofactor is Mg(2+). The disulfide bond which can form in the large chain dimeric partners within the hexadecamer appears to be associated with oxidative stress and protein turnover.

It localises to the plastid. The protein localises to the chloroplast. It catalyses the reaction 2 (2R)-3-phosphoglycerate + 2 H(+) = D-ribulose 1,5-bisphosphate + CO2 + H2O. The enzyme catalyses D-ribulose 1,5-bisphosphate + O2 = 2-phosphoglycolate + (2R)-3-phosphoglycerate + 2 H(+). Its function is as follows. RuBisCO catalyzes two reactions: the carboxylation of D-ribulose 1,5-bisphosphate, the primary event in carbon dioxide fixation, as well as the oxidative fragmentation of the pentose substrate in the photorespiration process. Both reactions occur simultaneously and in competition at the same active site. In Drosera peltata (Pale sundew), this protein is Ribulose bisphosphate carboxylase large chain.